A 212-amino-acid polypeptide reads, in one-letter code: MKTRIDLTVEPRETGKHNSRGLRTSRNVPAVIYGAVTPTNVSVGEKEIVKYNTRAYENALFNLKSSDKTANGIVVLIKSVDVHPLTRRPQHVDFFALDLKKAVRVNVEVRLEGKAIGLSEGGLLNVVLRSVEVECLPTEIPEFFTADISNLAVGDALHVSDIKVSGSVKMITGAEQTIAVVNAQEEEVAAAPAAAAAPAAAAPAAKAPAAKK.

Residues 1–16 (MKTRIDLTVEPRETGK) show a composition bias toward basic and acidic residues. Residues 1-22 (MKTRIDLTVEPRETGKHNSRGL) form a disordered region.

Belongs to the bacterial ribosomal protein bL25 family. CTC subfamily. In terms of assembly, part of the 50S ribosomal subunit; part of the 5S rRNA/L5/L18/L25 subcomplex. Contacts the 5S rRNA. Binds to the 5S rRNA independently of L5 and L18.

This is one of the proteins that binds to the 5S RNA in the ribosome where it forms part of the central protuberance. The sequence is that of Large ribosomal subunit protein bL25 from Bdellovibrio bacteriovorus (strain ATCC 15356 / DSM 50701 / NCIMB 9529 / HD100).